Reading from the N-terminus, the 256-residue chain is MRHPLVIGNWKLNGSKHMVSNFIISLRNQLSNMINCCNVAIAPPMIYLDRAKSYLTGSHIALGAQNVDLHVSGAFTGEISAKMLKDIGAKYIIIGHIERRLYHKESNEDIANKFACLKNEGLIPVLCIGETKEENEKDQTKAICVRQLDYILNIVGTQAFKNAVIAYEPIWAIATGKSANPLQIQKIHKFIRSYLFNHDQAIAEQVIIQYGGSVNASNAAELFNQPDVDGALVGGASLKADIFATIIKAAARAKKN.

Substrate is bound at residue 9–11 (NWK). Catalysis depends on histidine 96, which acts as the Electrophile. Glutamate 168 functions as the Proton acceptor in the catalytic mechanism. Substrate-binding positions include serine 213 and 234–235 (GG).

It belongs to the triosephosphate isomerase family. As to quaternary structure, homodimer.

It is found in the cytoplasm. It catalyses the reaction D-glyceraldehyde 3-phosphate = dihydroxyacetone phosphate. It functions in the pathway carbohydrate biosynthesis; gluconeogenesis. It participates in carbohydrate degradation; glycolysis; D-glyceraldehyde 3-phosphate from glycerone phosphate: step 1/1. In terms of biological role, involved in the gluconeogenesis. Catalyzes stereospecifically the conversion of dihydroxyacetone phosphate (DHAP) to D-glyceraldehyde-3-phosphate (G3P). This is Triosephosphate isomerase from Baumannia cicadellinicola subsp. Homalodisca coagulata.